The chain runs to 301 residues: Protein FdhE homolog (301 aa).

The protein belongs to the FdhE family.

It localises to the cytoplasm. In terms of biological role, necessary for formate dehydrogenase activity. This is Protein FdhE homolog from Shewanella baltica (strain OS223).